The chain runs to 130 residues: Small ribosomal subunit protein uS11 (130 aa).

Belongs to the universal ribosomal protein uS11 family. In terms of assembly, part of the 30S ribosomal subunit. Interacts with proteins S7 and S18. Binds to IF-3.

Its function is as follows. Located on the platform of the 30S subunit, it bridges several disparate RNA helices of the 16S rRNA. Forms part of the Shine-Dalgarno cleft in the 70S ribosome. The sequence is that of Small ribosomal subunit protein uS11 from Xylella fastidiosa (strain 9a5c).